Here is a 238-residue protein sequence, read N- to C-terminus: Ribonuclease PH (238 aa).

Phosphate contacts are provided by residues arginine 86 and 124-126; that span reads GTR.

This sequence belongs to the RNase PH family. In terms of assembly, homohexameric ring arranged as a trimer of dimers.

It carries out the reaction tRNA(n+1) + phosphate = tRNA(n) + a ribonucleoside 5'-diphosphate. In terms of biological role, phosphorolytic 3'-5' exoribonuclease that plays an important role in tRNA 3'-end maturation. Removes nucleotide residues following the 3'-CCA terminus of tRNAs; can also add nucleotides to the ends of RNA molecules by using nucleoside diphosphates as substrates, but this may not be physiologically important. Probably plays a role in initiation of 16S rRNA degradation (leading to ribosome degradation) during starvation. In Halorhodospira halophila (strain DSM 244 / SL1) (Ectothiorhodospira halophila (strain DSM 244 / SL1)), this protein is Ribonuclease PH.